Here is a 270-residue protein sequence, read N- to C-terminus: Regulatory protein RecX (270 aa).

The protein belongs to the RecX family.

The protein resides in the cytoplasm. Its function is as follows. Modulates RecA activity. This is Regulatory protein RecX from Bacillus thuringiensis subsp. konkukian (strain 97-27).